A 277-amino-acid polypeptide reads, in one-letter code: NAD kinase (277 aa).

The active-site Proton acceptor is Asp-55. NAD(+)-binding positions include 55-56, 131-132, Arg-157, Asp-159, and 170-175; these read DG, NE, and TAYNKS.

It belongs to the NAD kinase family. The cofactor is a divalent metal cation.

The protein localises to the cytoplasm. It carries out the reaction NAD(+) + ATP = ADP + NADP(+) + H(+). Involved in the regulation of the intracellular balance of NAD and NADP, and is a key enzyme in the biosynthesis of NADP. Catalyzes specifically the phosphorylation on 2'-hydroxyl of the adenosine moiety of NAD to yield NADP. This is NAD kinase from Streptococcus mutans serotype c (strain ATCC 700610 / UA159).